The chain runs to 952 residues: Eukaryotic translation initiation factor 3 subunit A (952 aa).

One can recognise a PCI domain in the interval 315-491; that stretch reads HAERAGIVND…QTITFVSTPP (177 aa). Residues 522–849 are a coiled coil; it reads DAFAAAIAQA…RRQAEKAAAT (328 aa). The segment covering 757–797 has biased composition (basic and acidic residues); the sequence is EKVIKRKREEKERKLKEAREAEERKRKEEEEAAQKAEEEAR. Residues 757-952 form a disordered region; that stretch reads EKVIKRKREE…RGMPSTRGGA (196 aa). Over residues 798–809 the composition is skewed to low complexity; sequence AAAALEAEAAAA. A compositionally biased stretch (basic and acidic residues) spans 810–844; sequence EQRRAEREAQRQSDLERIRAQQEREEEALRRRQAE. Composition is skewed to low complexity over residues 856–878 and 893–918; these read RPPA…GGPS and GAPV…SNGP.

It belongs to the eIF-3 subunit A family. Component of the eukaryotic translation initiation factor 3 (eIF-3) complex.

It localises to the cytoplasm. RNA-binding component of the eukaryotic translation initiation factor 3 (eIF-3) complex, which is involved in protein synthesis of a specialized repertoire of mRNAs and, together with other initiation factors, stimulates binding of mRNA and methionyl-tRNAi to the 40S ribosome. The eIF-3 complex specifically targets and initiates translation of a subset of mRNAs involved in cell proliferation. This Cryptococcus neoformans var. neoformans serotype D (strain B-3501A) (Filobasidiella neoformans) protein is Eukaryotic translation initiation factor 3 subunit A.